The primary structure comprises 149 residues: Alpha-crystallin A chain (149 aa).

The sHSP domain maps to 28-138 (LLRGFMDSGI…SHSERPIPVS (111 aa)). Zn(2+) is bound by residues His-55, His-76, Glu-78, His-83, His-91, and His-130. Positions 125-149 (NLVSSHSERPIPVSREEKPTSAPSS) are disordered. Over residues 130-143 (HSERPIPVSREEKP) the composition is skewed to basic and acidic residues. A glycan (O-linked (GlcNAc) serine) is linked at Ser-138.

The protein belongs to the small heat shock protein (HSP20) family. In terms of assembly, heteropolymer composed of three CRYAA and one CRYAB subunits. Inter-subunit bridging via zinc ions enhances stability, which is crucial as there is no protein turn over in the lens. Can also form homodimers and homotetramers (dimers of dimers) which serve as the building blocks of homooligomers. Within homooligomers, the zinc-binding motif is created from residues of 3 different molecules. His-76 and Glu-78 from one molecule are ligands of the zinc ion, and His-83 and His-130 residues from additional molecules complete the site with tetrahedral coordination geometry.

Its subcellular location is the cytoplasm. It localises to the nucleus. Contributes to the transparency and refractive index of the lens. May act as a chaperone, preventing aggregation of various proteins under a wide range of stress conditions. In Rana temporaria (European common frog), this protein is Alpha-crystallin A chain (CRYAA).